Reading from the N-terminus, the 197-residue chain is Pyridoxal 5'-phosphate synthase subunit PdxT (197 aa).

Position 50 to 52 (50 to 52 (GES)) interacts with L-glutamine. The Nucleophile role is filled by C82. L-glutamine contacts are provided by residues R111 and 140–141 (IR). Active-site charge relay system residues include H176 and E178.

This sequence belongs to the glutaminase PdxT/SNO family. As to quaternary structure, in the presence of PdxS, forms a dodecamer of heterodimers. Only shows activity in the heterodimer.

It catalyses the reaction aldehydo-D-ribose 5-phosphate + D-glyceraldehyde 3-phosphate + L-glutamine = pyridoxal 5'-phosphate + L-glutamate + phosphate + 3 H2O + H(+). The enzyme catalyses L-glutamine + H2O = L-glutamate + NH4(+). The protein operates within cofactor biosynthesis; pyridoxal 5'-phosphate biosynthesis. Functionally, catalyzes the hydrolysis of glutamine to glutamate and ammonia as part of the biosynthesis of pyridoxal 5'-phosphate. The resulting ammonia molecule is channeled to the active site of PdxS. The polypeptide is Pyridoxal 5'-phosphate synthase subunit PdxT (Streptomyces griseus subsp. griseus (strain JCM 4626 / CBS 651.72 / NBRC 13350 / KCC S-0626 / ISP 5235)).